Reading from the N-terminus, the 171-residue chain is Shikimate kinase (171 aa).

Residue 14–19 coordinates ATP; the sequence is GAGKST. A Mg(2+)-binding site is contributed by serine 18. 3 residues coordinate substrate: aspartate 36, arginine 60, and glycine 82. Arginine 120 contacts ATP. Residue arginine 139 participates in substrate binding. Residue glutamine 156 participates in ATP binding.

This sequence belongs to the shikimate kinase family. In terms of assembly, monomer. The cofactor is Mg(2+).

Its subcellular location is the cytoplasm. It catalyses the reaction shikimate + ATP = 3-phosphoshikimate + ADP + H(+). It participates in metabolic intermediate biosynthesis; chorismate biosynthesis; chorismate from D-erythrose 4-phosphate and phosphoenolpyruvate: step 5/7. Its function is as follows. Catalyzes the specific phosphorylation of the 3-hydroxyl group of shikimic acid using ATP as a cosubstrate. This chain is Shikimate kinase, found in Shewanella denitrificans (strain OS217 / ATCC BAA-1090 / DSM 15013).